The sequence spans 193 residues: Peptidyl-tRNA hydrolase (193 aa).

TRNA is bound at residue Tyr14. The active-site Proton acceptor is the His19. TRNA-binding residues include Phe64, Asn66, and Asn112.

Belongs to the PTH family. In terms of assembly, monomer.

The protein localises to the cytoplasm. The catalysed reaction is an N-acyl-L-alpha-aminoacyl-tRNA + H2O = an N-acyl-L-amino acid + a tRNA + H(+). In terms of biological role, hydrolyzes ribosome-free peptidyl-tRNAs (with 1 or more amino acids incorporated), which drop off the ribosome during protein synthesis, or as a result of ribosome stalling. Its function is as follows. Catalyzes the release of premature peptidyl moieties from peptidyl-tRNA molecules trapped in stalled 50S ribosomal subunits, and thus maintains levels of free tRNAs and 50S ribosomes. This is Peptidyl-tRNA hydrolase from Bartonella henselae (strain ATCC 49882 / DSM 28221 / CCUG 30454 / Houston 1) (Rochalimaea henselae).